Reading from the N-terminus, the 30-residue chain is Cycloviolacin-O9 (30 aa).

The segment at residues 1–30 is a cross-link (cyclopeptide (Gly-Asn)); sequence GIPCGESCVWIPCLTSAVGCSCKSKVCYRN. 3 disulfide bridges follow: cysteine 4–cysteine 20, cysteine 8–cysteine 22, and cysteine 13–cysteine 27.

This is a cyclic peptide.

Probably participates in a plant defense mechanism. The chain is Cycloviolacin-O9 from Viola odorata (Sweet violet).